Reading from the N-terminus, the 505-residue chain is MAADWLGSIVSINCGNTLGVYQGCVSAVDRINQTISLSQPFHNGVKCLVPEVTFRAGDISELKILEIPSESLKYTSDQLNDHSTGFGYLPTRQQNGTGKQKQTVAHNSAQNIPGQEEGKASEPSSTSPQPCSKSFVDRHNEAVNQPKNFRRRHNSLGSSSSRYPNQVTPKKSGTKNGQLKARDDECFGDELEEIPDTDFDFEGNLALFDKAAVFEEIDTHERRGGGGTRSRGTPNERPPTYRHDENILESEPIVYRKIVVPQSGGQEYCTDSGLVVPSISYVLHKKLLCVAEKHGLSVERRLEMSGVCASQMALTLLGGPNRLNPKNVHQRPTVALLCGPHVKGAQGISCGRHLANYDVDIILFLPNFVKMLEPVTNELNLFCQTQGKQVSSVKDLPECPVDLVINCLDCNENAFLCDQPWYRAAVDWANHNRAPVLNIDPPVGDHVQGIHAKWSLELGLPLALGEQAGRIYLCDIGIPQKVFREVGISYHSPFGCKFVIPLHSM.

Residues 1 to 68 form the Sm domain; sequence MAADWLGSIV…ISELKILEIP (68 aa). The segment at 1–79 is required for P-body targeting and interaction with DCP1A; it reads MAADWLGSIV…ESLKYTSDQL (79 aa). 2 disordered regions span residues 84–181 and 219–243; these read TGFG…QLKA and THERRGGGGTRSRGTPNERPPTYRH. Polar residues-rich tracts occupy residues 91–113, 122–132, and 155–177; these read TRQQNGTGKQKQTVAHNSAQNIP, EPSSTSPQPCS, and SLGSSSSRYPNQVTPKKSGTKNG. The interval 186 to 293 is required for interaction with DDX6; it reads CFGDELEEIP…HKKLLCVAEK (108 aa). In terms of domain architecture, DFDF spans 187–223; the sequence is FGDELEEIPDTDFDFEGNLALFDKAAVFEEIDTHERR. In terms of domain architecture, YjeF N-terminal spans 280–484; that stretch reads SYVLHKKLLC…DIGIPQKVFR (205 aa).

This sequence belongs to the EDC3 family.

The protein resides in the cytoplasm. It localises to the P-body. In terms of biological role, binds single-stranded RNA. Involved in the process of mRNA degradation and in the positive regulation of mRNA decapping. The chain is Enhancer of mRNA-decapping protein 3 (edc3) from Xenopus laevis (African clawed frog).